Consider the following 268-residue polypeptide: Esterase GME11355 (268 aa).

Residues Ser-122, Asp-212, and His-240 each act as charge relay system in the active site.

This sequence belongs to the LovG family.

Its pathway is secondary metabolite biosynthesis. Its function is as follows. Esterase; part of the gene cluster that mediates the biosynthesis of dibenzodioxocinones such as pestalotiollide B, a novel class of inhibitors against cholesterol ester transfer protein (CEPT). The biosynthesis initiates from condensation of acetate and malonate units catalyzed by the non-reducing PKS pks8/GME11356. Pks8/GME11356 lacks a thioesterase (TE) domain, which is important to the cyclizing of the third ring of atrochrysone carboxylic acid, and the esterase GME11355 might play the role of TE and catalyzes the cyclization reaction of the C ring. The lactamase-like protein GME11357 (or other beta-lactamases in Pestalotiopsis microspora) probably hydrolyzes the thioester bond between the ACP of pks8/GME11356 and the intermediate to release atrochrysone carboxylic acid, which is spontaneously dehydrates to form endocrocin anthrone. Endocrocin anthrone is further converted to emodin via the endocrocin intermediate. Emodin is then oxidized by several enzymes such as the Baeyer-Villiger oxidase GME11358, the oxidoreductase GME11367, the short chain dehydrogenase/reductase GME11373, as well as by other oxidoreductases from the cluster, to modify the A and C rings and open the B ring, and finally yield monodictyphenone. The prenyltransferase GME11375 may catalyze the addition reaction between the C5 side chains and the carbon bone of dibenzodioxocinones. The remaining biochemical reactions to the final product dibenzodioxocinones should be methylation catalyzed by methyltransferase GME11366 and reduction and lactonization reaction catalyzed by a series of oxidordeuctases. The chain is Esterase GME11355 from Pestalotiopsis microspora.